Here is a 342-residue protein sequence, read N- to C-terminus: Ribosomal RNA small subunit methyltransferase H (342 aa).

Residues 42-44, aspartate 61, phenylalanine 88, aspartate 119, and glutamine 126 each bind S-adenosyl-L-methionine; that span reads GGH.

This sequence belongs to the methyltransferase superfamily. RsmH family.

The protein resides in the cytoplasm. The enzyme catalyses cytidine(1402) in 16S rRNA + S-adenosyl-L-methionine = N(4)-methylcytidine(1402) in 16S rRNA + S-adenosyl-L-homocysteine + H(+). Functionally, specifically methylates the N4 position of cytidine in position 1402 (C1402) of 16S rRNA. The protein is Ribosomal RNA small subunit methyltransferase H of Corynebacterium jeikeium (strain K411).